The chain runs to 93 residues: UPF0223 protein str0998 (93 aa).

This sequence belongs to the UPF0223 family.

This Streptococcus thermophilus (strain CNRZ 1066) protein is UPF0223 protein str0998.